A 60-amino-acid chain; its full sequence is Conotoxin Cal6.30 (60 aa).

An N-terminal signal peptide occupies residues 1–22 (MKVTCVLTLAVLILTIGQIANA). Disulfide bonds link Cys31-Cys47, Cys38-Cys51, and Cys46-Cys55.

In terms of tissue distribution, expressed by the venom duct.

The protein localises to the secreted. Its function is as follows. Probable neurotoxin. This chain is Conotoxin Cal6.30, found in Californiconus californicus (California cone).